The following is a 121-amino-acid chain: Phosphoribosyl-AMP cyclohydrolase (121 aa).

Position 76 (D76) interacts with Mg(2+). Zn(2+) is bound at residue C77. The Mg(2+) site is built by D78 and D80. The Zn(2+) site is built by C93 and C100.

It belongs to the PRA-CH family. In terms of assembly, homodimer. Mg(2+) is required as a cofactor. Requires Zn(2+) as cofactor.

The protein localises to the cytoplasm. The catalysed reaction is 1-(5-phospho-beta-D-ribosyl)-5'-AMP + H2O = 1-(5-phospho-beta-D-ribosyl)-5-[(5-phospho-beta-D-ribosylamino)methylideneamino]imidazole-4-carboxamide. The protein operates within amino-acid biosynthesis; L-histidine biosynthesis; L-histidine from 5-phospho-alpha-D-ribose 1-diphosphate: step 3/9. Its function is as follows. Catalyzes the hydrolysis of the adenine ring of phosphoribosyl-AMP. The chain is Phosphoribosyl-AMP cyclohydrolase from Methanococcoides burtonii (strain DSM 6242 / NBRC 107633 / OCM 468 / ACE-M).